The following is a 470-amino-acid chain: Properdin (470 aa).

Residues methionine 1 to serine 26 form the signal peptide. TSP type-1 domains follow at residues aspartate 27–arginine 75, serine 76–proline 133, methionine 135–proline 190, histidine 192–proline 254, alanine 256–proline 312, aspartate 314–isoleucine 376, and lysine 380–lysine 463. 3 disulfide bridges follow: cysteine 31–cysteine 55, cysteine 42–cysteine 71, and cysteine 56–cysteine 74. Residues tryptophan 82 and tryptophan 85 are each glycosylated (C-linked (Man) tryptophan). Cystine bridges form between cysteine 88-cysteine 126, cysteine 92-cysteine 132, cysteine 103-cysteine 110, cysteine 131-cysteine 169, cysteine 147-cysteine 183, cysteine 151-cysteine 189, and cysteine 162-cysteine 173. C-linked (Man) tryptophan glycans are attached at residues tryptophan 138, tryptophan 141, and tryptophan 144. An O-linked (Fuc...) threonine glycan is attached at threonine 150. C-linked (Man) tryptophan glycosylation is found at tryptophan 195, tryptophan 198, and tryptophan 201. Intrachain disulfides connect cysteine 204–cysteine 247, cysteine 208–cysteine 253, and cysteine 223–cysteine 237. The O-linked (Fuc...) serine glycan is linked to serine 207. C-linked (Man) tryptophan glycans are attached at residues tryptophan 259 and tryptophan 262. 3 disulfide bridges follow: cysteine 268/cysteine 305, cysteine 272/cysteine 311, and cysteine 283/cysteine 295. Threonine 271 carries an O-linked (Fuc...) threonine glycan. Tryptophan 320 and tryptophan 323 each carry a C-linked (Man) tryptophan glycan. 3 disulfides stabilise this stretch: cysteine 326-cysteine 369, cysteine 336-cysteine 375, and cysteine 349-cysteine 359. The tract at residues lysine 350–arginine 358 is interaction with Complement C3 beta chain. Residues tryptophan 383, tryptophan 386, and tryptophan 389 are each glycosylated (C-linked (Man) tryptophan). 3 disulfide bridges follow: cysteine 392–cysteine 456, cysteine 396–cysteine 462, and cysteine 408–cysteine 440. A glycan (N-linked (GlcNAc...) asparagine) is linked at asparagine 429.

As to quaternary structure, in plasma, properdin exists as dimers, trimers or tetramers in the relative proportions of 26:54:20. Interacts with the pro-C3-convertase enzyme complex (C3b-Bb) comprised of Complement C3 beta chain (C3b) and the Complement factor B Bb fragment (Bb), where it binds (via its TSP type-1 5 domain) with C3b and Bb. This interaction stabilizes the complex and allows it to become the active C3-convertase enzyme complex (C3b-Bb-FP). Interacts with C3b. Interacts with CFB.

It localises to the secreted. Functionally, a positive regulator of the alternate pathway of complement. It binds to and stabilizes the C3- and C5-convertase enzyme complexes. Inhibits CFI-CFH mediated degradation of Inhibits CFI-CFH mediated degradation of Complement C3 beta chain (C3b). The chain is Properdin (CFP) from Cavia porcellus (Guinea pig).